We begin with the raw amino-acid sequence, 467 residues long: Asparagine--tRNA ligase (467 aa).

The protein belongs to the class-II aminoacyl-tRNA synthetase family. As to quaternary structure, homodimer.

The protein resides in the cytoplasm. The enzyme catalyses tRNA(Asn) + L-asparagine + ATP = L-asparaginyl-tRNA(Asn) + AMP + diphosphate + H(+). This chain is Asparagine--tRNA ligase, found in Baumannia cicadellinicola subsp. Homalodisca coagulata.